The following is a 575-amino-acid chain: Cytoskeleton-associated protein 4 (575 aa).

Residues 1-73 (MPSAKQRGSK…RGRSSAATAN (73 aa)) are disordered. At 1–85 (MPSAKQRGSK…SASCSRRLGR (85 aa)) the chain is on the cytoplasmic side. Ser3, Ser17, and Ser19 each carry phosphoserine. An N6-acetyllysine modification is found at Lys21. A compositionally biased stretch (pro residues) spans 37–53 (PAAPQQPQPPAPHPPQH). A lipid anchor (S-palmitoyl cysteine; by ZDHHC2) is attached at Cys79. The chain crosses the membrane as a helical span at residues 86–108 (VLNFLFYLSLVAAAAFSGWYVHH). Residues 109–575 (VLEEVQQVRR…LKVEKIHEKI (467 aa)) lie on the Extracellular side of the membrane. A coiled-coil region spans residues 125-193 (RQRDELGQGL…QKLQNEILKD (69 aa)). A phosphoserine mark is found at Ser211, Ser292, and Ser367. 2 coiled-coil regions span residues 236–438 (DVQK…VGNL) and 507–575 (SSLD…HEKI).

As to quaternary structure, interacts with REEP5. In terms of processing, reversibly palmitoylated. Palmitoylation at Cys-79 by DHHC2 is required for its trafficking from the ER to the plasma membrane and for its perinuclear localization. Post-translationally, increased phosphorylation during mitosis prevents binding to microtubules. As to expression, expressed in cardiomyocytes (at protein level).

Its subcellular location is the endoplasmic reticulum membrane. The protein resides in the cell membrane. The protein localises to the cytoplasm. It is found in the cytoskeleton. It localises to the perinuclear region. Functionally, high-affinity epithelial cell surface receptor for APF. Its function is as follows. Mediates the anchoring of the endoplasmic reticulum to microtubules. The polypeptide is Cytoskeleton-associated protein 4 (Ckap4) (Mus musculus (Mouse)).